The sequence spans 518 residues: Squalene monooxygenase 1,2 (518 aa).

A run of 2 helical transmembrane segments spans residues 3 to 23 (MAFV…WTIF) and 48 to 68 (GPDV…YALA). Residues 58 to 59 (VG), 78 to 79 (ER), Arg86, Phe91, Arg158, Val174, Asp337, and Met350 each bind FAD. A helical membrane pass occupies residues 448–468 (LFYHLFVISLSSIGQLLSPFP).

This sequence belongs to the squalene monooxygenase family. The cofactor is FAD.

The protein resides in the membrane. The enzyme catalyses squalene + reduced [NADPH--hemoprotein reductase] + O2 = (S)-2,3-epoxysqualene + oxidized [NADPH--hemoprotein reductase] + H2O + H(+). It functions in the pathway terpene metabolism; lanosterol biosynthesis; lanosterol from farnesyl diphosphate: step 2/3. Functionally, catalyzes the stereospecific oxidation of squalene to (S)-2,3-epoxysqualene, and is considered to be a rate-limiting enzyme in steroid biosynthesis. This is Squalene monooxygenase 1,2 (SQP1,2) from Brassica napus (Rape).